We begin with the raw amino-acid sequence, 67 residues long: MKVYDCCDLVRELYSQIGSGDQGYIPKAITCAVKTLNDLAADESLPKEARDRAAFAAANLLISDFED.

The protein belongs to the UPF0253 family.

This Vibrio atlanticus (strain LGP32) (Vibrio splendidus (strain Mel32)) protein is UPF0253 protein VS_2370.